Reading from the N-terminus, the 234-residue chain is OVARIAN TUMOR DOMAIN-containing deubiquitinating enzyme 3 (234 aa).

Positions tyrosine 76–arginine 234 constitute an OTU domain. Residues valine 81–cysteine 87 are cys-loop. Residue aspartate 84 is part of the active site. Cysteine 87 functions as the Nucleophile in the catalytic mechanism. Residues isoleucine 154–serine 164 form a variable-loop region. Residues tyrosine 224–histidine 229 are his-loop. Residue histidine 229 is part of the active site.

This sequence belongs to the peptidase C85 family.

The enzyme catalyses Thiol-dependent hydrolysis of ester, thioester, amide, peptide and isopeptide bonds formed by the C-terminal Gly of ubiquitin (a 76-residue protein attached to proteins as an intracellular targeting signal).. Functionally, hydrolase that can remove conjugated ubiquitin from proteins in vitro and may therefore play an important regulatory role at the level of protein turnover by preventing degradation. Cysteine protease with a preference for 'Lys-63' over 'Lys-48' over 'Met-1' -linked ubiquitin (UB) tetramers (e.g. Ub3 and Ub4) as substrates. Also cleaves RUB-GST fusion. The protein is OVARIAN TUMOR DOMAIN-containing deubiquitinating enzyme 3 of Arabidopsis thaliana (Mouse-ear cress).